Here is a 135-residue protein sequence, read N- to C-terminus: Nitrogen fixation protein NifU 1 (135 aa).

Over residues 1-10 (MRDMQDDDTK) the composition is skewed to basic and acidic residues. The tract at residues 1 to 29 (MRDMQDDDTKSPAPPPAAAAAARRAAGQA) is disordered. Over residues 18–29 (AAAAARRAAGQA) the composition is skewed to low complexity.

It belongs to the NifU family.

Functionally, may be involved in the formation or repair of [Fe-S] clusters present in iron-sulfur proteins. In Rhodobacter capsulatus (Rhodopseudomonas capsulata), this protein is Nitrogen fixation protein NifU 1 (nifU1).